Reading from the N-terminus, the 235-residue chain is Venom metalloproteinase antarease-like TserMP_B (235 aa).

A Peptidase M12B domain is found at 4 to 233; sequence IVVEYYIVTD…PTASCIFQQC (230 aa). C137 and C228 are joined by a disulfide. H161 provides a ligand contact to Zn(2+). E162 is a catalytic residue. Zn(2+) is bound by residues H165 and H171.

The protein belongs to the venom metalloproteinase (M12B) family. Zn(2+) serves as cofactor. In terms of tissue distribution, expressed by the venom gland.

It localises to the secreted. Inhibited by EDTA. In terms of biological role, acts as a metalloprotease. Penetrates intact tissue and specifically cleaves the vesicle-associated membrane protein 2 (VAMP2) (part of the SNARE complex) involved in pancreatic secretion, thus disrupting the normal vesicular traffic. In Tityus serrulatus (Brazilian scorpion), this protein is Venom metalloproteinase antarease-like TserMP_B.